A 496-amino-acid chain; its full sequence is Pup--protein ligase (496 aa).

Glutamate 30 serves as a coordination point for Mg(2+). Arginine 73 is a binding site for ATP. Tyrosine 75 provides a ligand contact to Mg(2+). Catalysis depends on aspartate 77, which acts as the Proton acceptor. Glutamate 83 is a Mg(2+) binding site. Residues threonine 86 and tryptophan 450 each contribute to the ATP site.

Belongs to the Pup ligase/Pup deamidase family. Pup-conjugating enzyme subfamily.

The enzyme catalyses ATP + [prokaryotic ubiquitin-like protein]-L-glutamate + [protein]-L-lysine = ADP + phosphate + N(6)-([prokaryotic ubiquitin-like protein]-gamma-L-glutamyl)-[protein]-L-lysine.. Its pathway is protein degradation; proteasomal Pup-dependent pathway. It functions in the pathway protein modification; protein pupylation. In terms of biological role, catalyzes the covalent attachment of the prokaryotic ubiquitin-like protein modifier Pup to the proteasomal substrate proteins, thereby targeting them for proteasomal degradation. This tagging system is termed pupylation. The ligation reaction involves the side-chain carboxylate of the C-terminal glutamate of Pup and the side-chain amino group of a substrate lysine. This chain is Pup--protein ligase, found in Bifidobacterium animalis subsp. lactis (strain AD011).